The following is a 10746-amino-acid chain: Extracellular matrix-binding protein ebh (10746 aa).

The first 39 residues, 1-39, serve as a signal peptide directing secretion; it reads MNYRDKIQKFSIRKYTVGTFSTVIATLVFLGLNTSQAQA. 2 stretches are compositionally biased toward polar residues: residues 41-59 and 67-113; these read ETNQ…GDTQ and VQNS…SQNE. 3 disordered regions span residues 41–174, 246–274, and 1340–1372; these read ETNQ…GNVQ, MPQR…PRSV, and IAGN…DGQR. Residues 120 to 130 are compositionally biased toward low complexity; the sequence is AAATPTQSAKA. A compositionally biased stretch (basic and acidic residues) spans 132-158; sequence SKHEQSESRAANKKENDNKATHVESHE. The segment covering 162–173 has biased composition (polar residues); that stretch reads VTASDSSDSGNV. Residues 248 to 263 show a composition bias toward low complexity; that stretch reads QRQQTSRRSSRIQTRS. A compositionally biased stretch (polar residues) spans 1356–1372; it reads YKTTGYSQSNPTSDGQR. 59 FIVAR domains span residues 2520–2576, 2606–2662, 2683–2746, 2776–2832, 2860–2915, 2943–2998, 3026–3081, 3150–3208, 3276–3335, 3403–3461, 3529–3587, 3655–3713, 3781–3839, 3907–3965, 4033–4091, 4159–4217, 4285–4343, 4411–4469, 4537–4595, 4663–4721, 4789–4847, 4915–4973, 5041–5099, 5167–5225, 5293–5351, 5419–5477, 5545–5603, 5671–5729, 5797–5855, 5923–5981, 6049–6107, 6175–6232, 6300–6358, 6426–6484, 6552–6610, 6678–6736, 6804–6862, 6930–6988, 7056–7114, 7182–7240, 7308–7366, 7434–7492, 7560–7618, 7686–7744, 7812–7870, 7938–7996, 8064–8125, 8190–8251, 8316–8374, 8442–8500, 8568–8625, 8693–8751, 8819–8877, 8945–9003, 9071–9129, 9197–9255, 9323–9377, 9445–9504, and 9699–9755; these read AKNH…VNAA, SKNN…ISDE, DTHE…VQTA, AKTK…IAAK, AKTQ…IRQN, AKNQ…INTN, AKTQ…INDK, AMTK…VNQK, AMTG…VNNA, AMGN…VNSA, AMGN…VTEA, AMNT…ITQK, AMAS…VEAA, AMGN…VEQA, AMGQ…VTAA, AMKG…ITQA, QMGN…VEAA, AMAN…VENA, AMGT…INQI, AMGQ…VDRA, AMNS…VDNA, AMGA…INGM, AMTV…VNSA, AMHS…VEQA, AMGQ…VERA, AMTA…VTNA, AMKG…INQA, AMTN…VESA, AMSN…VEQA, AMNQ…INQK, AMGN…VQAA, AMGQ…VEAA, AMQR…VEQA, AMDQ…VTAA, AMNQ…VTQA, AMER…VEAA, AMGN…VEAA, AMDK…INQA, AMTQ…ITAA, AMTQ…IQQA, AMTN…VEQA, AMTQ…VAQA, AMGT…VTQA, AMSN…ITRA, AMDQ…ITNE, AMEL…VNRA, AMHG…INQA, LMDA…VTSA, AMKA…IDQA, AMEA…VEQL, AMQA…VEQL, AMET…VDQA, SMDQ…VDQA, VMDQ…VIKL, and AMET…INGA. Polar residues predominate over residues 7066 to 7080; the sequence is DNATTKQNQNYTDSS. Residues 7066–7085 form a disordered region; the sequence is DNATTKQNQNYTDSSPNKKD. A compositionally biased stretch (polar residues) spans 10492 to 10507; that stretch reads DHSKPSSNSDGQSNSH. Positions 10492–10530 are disordered; it reads DHSKPSSNSDGQSNSHLHVGYGTVNHPFNSSPIGHKKKL. The helical transmembrane segment at 10552 to 10572 threads the bilayer; the sequence is IKNALGVVGISGLLASFWFFI. Positions 10649-10746 are disordered; the sequence is RRKEDEEDVE…KKKKSKKNKK (98 aa). Positions 10664–10674 are enriched in basic and acidic residues; it reads TDEKVLQDNEH. Over residues 10719–10746 the composition is skewed to basic residues; it reads KGKKSASKKPSKKVAAKKKKKKSKKNKK.

The protein localises to the cell membrane. This chain is Extracellular matrix-binding protein ebh (ebh), found in Staphylococcus aureus (strain MRSA252).